The chain runs to 146 residues: MGNHLDGSYLPNTVMSIEDKQNTYNEAKEDSKICNKIYIKQSGKIDKKELKRIKKLDFFYSQKNDDEIERMFMNKPNGTFLLTDDATDENLFLVQKDLENGSLNIAKLDFNGKALYINGKNYFSLENYLKTVEDFYKYPLIYDENK.

It belongs to the asfivirus MGF 100 family.

Plays a role in virus cell tropism, and may be required for efficient virus replication in macrophages. This chain is Protein MGF 100-3L, found in Ornithodoros (relapsing fever ticks).